The chain runs to 216 residues: UPF0301 protein BBta_6966 (216 aa).

The protein belongs to the UPF0301 (AlgH) family.

This is UPF0301 protein BBta_6966 from Bradyrhizobium sp. (strain BTAi1 / ATCC BAA-1182).